A 337-amino-acid polypeptide reads, in one-letter code: Inositol 2-dehydrogenase 1 (337 aa).

This sequence belongs to the Gfo/Idh/MocA family. Homotetramer.

The catalysed reaction is myo-inositol + NAD(+) = scyllo-inosose + NADH + H(+). Its function is as follows. Involved in the oxidation of myo-inositol (MI) to 2-keto-myo-inositol (2KMI or 2-inosose). The sequence is that of Inositol 2-dehydrogenase 1 from Saccharopolyspora erythraea (strain ATCC 11635 / DSM 40517 / JCM 4748 / NBRC 13426 / NCIMB 8594 / NRRL 2338).